The primary structure comprises 449 residues: Telomere resolvase ResT (449 aa).

It depends on No cofactors were found to be necessary. as a cofactor.

Its subcellular location is the cytoplasm. The protein localises to the nucleoid. In terms of biological role, catalyzes the conservative, sequence-specific DNA breakage and reunion reaction that generates two hairpin telomeres from a replicated telomere substrate. Breaks two phosphodiester bonds in a single DNA duplex and joins each end with the opposite DNA strand to form covalently closed hairpin telomeres. In vitro relaxed-circular, open-circular and linearized plasmids, but not supercoiled DNA, are all substrates. Cleavage is position-dependent relative to conserved sequence elements. The sequence is that of Telomere resolvase ResT from Borreliella burgdorferi (strain ATCC 35210 / DSM 4680 / CIP 102532 / B31) (Borrelia burgdorferi).